The following is a 281-amino-acid chain: 4-diphosphocytidyl-2-C-methyl-D-erythritol kinase (281 aa).

Residues K11 and D138 contribute to the active site.

Belongs to the GHMP kinase family. IspE subfamily.

The catalysed reaction is 4-CDP-2-C-methyl-D-erythritol + ATP = 4-CDP-2-C-methyl-D-erythritol 2-phosphate + ADP + H(+). It functions in the pathway isoprenoid biosynthesis; isopentenyl diphosphate biosynthesis via DXP pathway; isopentenyl diphosphate from 1-deoxy-D-xylulose 5-phosphate: step 3/6. Catalyzes the phosphorylation of the position 2 hydroxy group of 4-diphosphocytidyl-2C-methyl-D-erythritol. This chain is 4-diphosphocytidyl-2-C-methyl-D-erythritol kinase, found in Pelagibacter ubique (strain HTCC1062).